Consider the following 264-residue polypeptide: Tryptophan synthase alpha chain (264 aa).

Active-site proton acceptor residues include E49 and D60.

Belongs to the TrpA family. As to quaternary structure, tetramer of two alpha and two beta chains.

It catalyses the reaction (1S,2R)-1-C-(indol-3-yl)glycerol 3-phosphate + L-serine = D-glyceraldehyde 3-phosphate + L-tryptophan + H2O. It participates in amino-acid biosynthesis; L-tryptophan biosynthesis; L-tryptophan from chorismate: step 5/5. Its function is as follows. The alpha subunit is responsible for the aldol cleavage of indoleglycerol phosphate to indole and glyceraldehyde 3-phosphate. This Geobacter sulfurreducens (strain ATCC 51573 / DSM 12127 / PCA) protein is Tryptophan synthase alpha chain.